Here is a 431-residue protein sequence, read N- to C-terminus: tRNA(Ile)-lysidine synthase (431 aa).

25–30 (SGGPDS) provides a ligand contact to ATP.

Belongs to the tRNA(Ile)-lysidine synthase family.

It is found in the cytoplasm. The catalysed reaction is cytidine(34) in tRNA(Ile2) + L-lysine + ATP = lysidine(34) in tRNA(Ile2) + AMP + diphosphate + H(+). In terms of biological role, ligates lysine onto the cytidine present at position 34 of the AUA codon-specific tRNA(Ile) that contains the anticodon CAU, in an ATP-dependent manner. Cytidine is converted to lysidine, thus changing the amino acid specificity of the tRNA from methionine to isoleucine. The polypeptide is tRNA(Ile)-lysidine synthase (Lactobacillus gasseri (strain ATCC 33323 / DSM 20243 / BCRC 14619 / CIP 102991 / JCM 1131 / KCTC 3163 / NCIMB 11718 / NCTC 13722 / AM63)).